The sequence spans 281 residues: MEAPQNVGIKRRLKRFFRRDGRALIFAMDHGFEHGPTDFEPVWEHVNPRVIIRKVVRAGIDGVMMLPGLARIAGDEVKPEVGLMIKLTSKTNLRPKPEQLLQSQLGFVDDAIKLGADAIAATVYWGSPQEDVMMRQFAEIVSYAHDLGYPVVQFAYPRGPYIDEKYGKKEDYRVVMYGARAAAESGADMIKTYWTGSKETFAKVVEAAAGVPVLLSGGAKTENPVDFLKVVWEVIEAGGAGAVVGRNIFQRENPEPMIKALIRVIHRNEDPEEAAKAEGLI.

The Schiff-base intermediate with dihydroxyacetone-P role is filled by K191.

This sequence belongs to the DeoC/FbaB aldolase family. As to quaternary structure, homooctamer.

It localises to the cytoplasm. The enzyme catalyses beta-D-fructose 1,6-bisphosphate = D-glyceraldehyde 3-phosphate + dihydroxyacetone phosphate. Activated by citrate. This is Fructose-bisphosphate aldolase class 1 (fba) from Pyrococcus furiosus (strain ATCC 43587 / DSM 3638 / JCM 8422 / Vc1).